The following is a 476-amino-acid chain: RuvB-like 1 (476 aa).

The segment at 1 to 23 (MDMEVDEAISGTSSSRLAPIEEV) is disordered. 89-96 (GPPATGKT) is a binding site for ATP.

It belongs to the RuvB family. Forms homohexameric rings. May form a dodecamer with ruvb-2 made of two stacked hexameric rings. In terms of tissue distribution, expressed in gonadal cells.

The protein localises to the cytoplasm. Its subcellular location is the nucleus. It catalyses the reaction ATP + H2O = ADP + phosphate + H(+). In terms of biological role, possesses single-stranded DNA-stimulated ATPase and ATP dependent DNA helicase (3' to 5') activity suggesting a role in nuclear processes such as recombination and transcription. May participate in several chromatin remodeling complexes that mediate the ATP-dependent exchange of histones and remodel chromatin by shifting nucleosomes. Involvement in these complexes is likely required for transcriptional activation of selected genes and DNA repair in response to DNA damage. Involved in the Ce-Tor signaling pathway whereby it is required for the accumulation and localization of box C/D snoRNP to nucleoli to regulate ribosomal maturation and thus protein synthesis. Antagonizes the transcriptional activity of transcription factor pha-4, to control postembryonic development and adult longevity. Has a role in pharyngeal development. Has a role in gonadal development. The protein is RuvB-like 1 of Caenorhabditis elegans.